The sequence spans 87 residues: Antitoxin YefM (87 aa).

This sequence belongs to the phD/YefM antitoxin family. Forms a complex with YoeB which inhibits its toxin activity.

Its function is as follows. Antitoxin component of a type II toxin-antitoxin (TA) system. A probable antitoxin for the putative mRNA interferase YeoB. The sequence is that of Antitoxin YefM from Streptomyces coelicolor (strain ATCC BAA-471 / A3(2) / M145).